The following is a 138-amino-acid chain: Thioredoxin H2-1 (138 aa).

Residues 1 to 20 (MGGAFSTSKPKPAAGEEGGE) form a disordered region. A Thioredoxin domain is found at 12 to 129 (PAAGEEGGES…LEKTINTLRS (118 aa)). Catalysis depends on nucleophile residues Cys-55 and Cys-58. Cys-55 and Cys-58 are joined by a disulfide.

The protein belongs to the thioredoxin family. Plant H-type subfamily.

Its subcellular location is the cytoplasm. Its function is as follows. Probable thiol-disulfide oxidoreductase that may be involved in the redox regulation of a number of cytosolic enzymes. The sequence is that of Thioredoxin H2-1 from Oryza sativa subsp. japonica (Rice).